The sequence spans 111 residues: Histone H2A-Bbd type 1 (111 aa).

It belongs to the histone H2A family. The nucleosome is a histone octamer containing two molecules each of H2A, H2B, H3 and H4 assembled in one H3-H4 heterotetramer and two H2A-H2B heterodimers. Incorporated into nucleosomes during late spermatogenesis. Interacts with H2BC1/TH2B; preferentially dimerizes with H2BC1/TH2B to form nucleosomes. As to expression, highly expressed in adult testis, mainly in spermatocytes.

It localises to the nucleus. The protein resides in the chromosome. Its function is as follows. Atypical histone H2A which replaces conventional H2A during late spermatogenesis and is involved in the replacement of histones to protamine in male germ cells. Core component of nucleosome: nucleosomes wrap and compact DNA into chromatin, limiting DNA accessibility to the cellular machineries which require DNA as a template. Nucleosomes containing H2AB1 only wrap 130 bp of DNA, compared to 147 bp for classical nucleosomes. In condensing spermatids, the heterodimer between H2AB1 and H2BC1/TH2B is loaded onto the nucleosomes and promotes loading of transition proteins (TNP1 and TNP2) onto the nucleosomes. Inclusion of the H2AB1-H2BC1/TH2B dimer into chromatin opens the nucleosomes, releasing the nucleosomal DNA ends and allowing the invasion of nucleosomes by transition proteins (TNP1 and TNP2). Then, transition proteins drive the recruitment and processing of protamines, which are responsible for histone eviction. This Mus musculus (Mouse) protein is Histone H2A-Bbd type 1 (H2ab1).